We begin with the raw amino-acid sequence, 349 residues long: uncharacterized protein (349 aa).

The next 10 membrane-spanning stretches (helical) occupy residues 15-35, 53-73, 91-111, 120-140, 147-167, 179-199, 218-238, 248-268, 276-296, and 302-322; these read VHSPIYLALAVVIFSAANPVT, ISFCNVLFVGNLCALGLMILI, WFLLTVTAILSRAIAPGLMFS, NVVLIGRLEPVFTLILSILLL, LSMVATLISFVGVAVTVFWGV, FGLGESFVAIAAFISAITTIL, LLGTFVFFWIAVIIYGFDHFM, WMLIYGAIIVVVGQVAWLAGL, INLASLVTPILAIIFAYLILL, and AQYLGGILLLLGAILSFIDNL. EamA domains follow at residues 39–164 and 191–319; these read IELG…VTVF and FISA…LSFI.

Belongs to the EamA transporter family.

It is found in the cell membrane. This is an uncharacterized protein from Synechocystis sp. (strain ATCC 27184 / PCC 6803 / Kazusa).